We begin with the raw amino-acid sequence, 70 residues long: Testis-expressed protein 53 (70 aa).

In terms of tissue distribution, expressed in Testis.

The polypeptide is Testis-expressed protein 53 (Homo sapiens (Human)).